The following is a 224-amino-acid chain: UPF0758 protein PSPTO_0086 (224 aa).

An MPN domain is found at 102 to 224 (ALENPAQVRN…PLSMVEKGLM (123 aa)). Zn(2+) is bound by residues His173, His175, and Asp186. The JAMM motif motif lies at 173 to 186 (HNHPSGITTPSRSD).

Belongs to the UPF0758 family.

The protein is UPF0758 protein PSPTO_0086 of Pseudomonas syringae pv. tomato (strain ATCC BAA-871 / DC3000).